A 261-amino-acid chain; its full sequence is UPF0246 protein Rmet_0978 (261 aa).

This sequence belongs to the UPF0246 family.

The sequence is that of UPF0246 protein Rmet_0978 from Cupriavidus metallidurans (strain ATCC 43123 / DSM 2839 / NBRC 102507 / CH34) (Ralstonia metallidurans).